Consider the following 327-residue polypeptide: Cyclin-A3-3 (327 aa).

It belongs to the cyclin family. Cyclin AB subfamily.

The polypeptide is Cyclin-A3-3 (CYCA3-3) (Arabidopsis thaliana (Mouse-ear cress)).